Reading from the N-terminus, the 65-residue chain is Conotoxin Cal1.3 (65 aa).

Residues Met1 to Ala18 form the signal peptide. Positions Val19 to Leu49 are excised as a propeptide. Intrachain disulfides connect Cys52/Cys62 and Cys53/Cys59. 4-hydroxyproline is present on Pro61. At Cys62 the chain carries Cysteine amide.

It belongs to the conotoxin T superfamily. As to expression, expressed by the venom duct.

It localises to the secreted. Probable neurotoxin with unknown target. Possibly targets ion channels. This Californiconus californicus (California cone) protein is Conotoxin Cal1.3.